We begin with the raw amino-acid sequence, 377 residues long: NADH dehydrogenase [ubiquinone] 1 alpha subcomplex subunit 9, mitochondrial (377 aa).

Residues 1-35 (MAAAAQSRVVRVLSMSRSAITAIATSVCHGPPCRQ) constitute a mitochondrion transit peptide. The residue at position 175 (Lys-175) is an N6-succinyllysine. An N6-acetyllysine mark is found at Lys-189 and Lys-370.

The protein belongs to the complex I NDUFA9 subunit family. As to quaternary structure, complex I is composed of 45 different subunits. This a component of the hydrophobic protein fraction. Interacts with BLOC1S1. Interacts with SLC2A4. Interacts with CLOCK. Interacts with RAB5IF. FAD is required as a cofactor. Post-translationally, acetylated on lysine residues. BLOC1S1 is required for acetylation. Acetylated by CLOCK in a circadian manner.

It is found in the mitochondrion matrix. Its function is as follows. Accessory subunit of the mitochondrial membrane respiratory chain NADH dehydrogenase (Complex I), that is believed not to be involved in catalysis. Complex I functions in the transfer of electrons from NADH to the respiratory chain. The immediate electron acceptor for the enzyme is believed to be ubiquinone. The chain is NADH dehydrogenase [ubiquinone] 1 alpha subcomplex subunit 9, mitochondrial (NDUFA9) from Pan troglodytes (Chimpanzee).